Consider the following 261-residue polypeptide: Small ribosomal subunit protein mS23 (261 aa).

The interval 234 to 261 is disordered; sequence NPSESWATDEKDPKKNDDIEEDVEEIKL. Positions 241-250 are enriched in basic and acidic residues; sequence TDEKDPKKND. Over residues 251 to 261 the composition is skewed to acidic residues; the sequence is DIEEDVEEIKL.

The protein belongs to the mitochondrion-specific ribosomal protein mS23 family. Component of the mitochondrial small ribosomal subunit.

It is found in the mitochondrion. This is Small ribosomal subunit protein mS23 (RSM25) from Vanderwaltozyma polyspora (strain ATCC 22028 / DSM 70294 / BCRC 21397 / CBS 2163 / NBRC 10782 / NRRL Y-8283 / UCD 57-17) (Kluyveromyces polysporus).